We begin with the raw amino-acid sequence, 246 residues long: Adenosylcobinamide-GDP ribazoletransferase (246 aa).

The next 6 helical transmembrane spans lie at 34–54, 59–79, 113–133, 138–158, 171–191, and 194–214; these read IVTF…VALL, CGVP…TGGF, GGLA…ELLL, PIAA…LLMY, LFIG…GVAL, and VLLG…IWGL.

It belongs to the CobS family. Requires Mg(2+) as cofactor.

It is found in the cell inner membrane. The catalysed reaction is alpha-ribazole + adenosylcob(III)inamide-GDP = adenosylcob(III)alamin + GMP + H(+). It catalyses the reaction alpha-ribazole 5'-phosphate + adenosylcob(III)inamide-GDP = adenosylcob(III)alamin 5'-phosphate + GMP + H(+). Its pathway is cofactor biosynthesis; adenosylcobalamin biosynthesis; adenosylcobalamin from cob(II)yrinate a,c-diamide: step 7/7. In terms of biological role, joins adenosylcobinamide-GDP and alpha-ribazole to generate adenosylcobalamin (Ado-cobalamin). Also synthesizes adenosylcobalamin 5'-phosphate from adenosylcobinamide-GDP and alpha-ribazole 5'-phosphate. The sequence is that of Adenosylcobinamide-GDP ribazoletransferase from Klebsiella pneumoniae (strain 342).